The primary structure comprises 842 residues: Xyloglucanase Xgh74A (842 aa).

Positions 1–32 (MVKKFTSKIKAAVFAAVVAATAIFGPAISSQA) are cleaved as a signal peptide. The active-site Nucleophile is aspartate 70. BNR repeat units follow at residues 134 to 144 (RSTDRGETWEK), 185 to 196 (WRSTDYGVTWSK), 252 to 262 (YRSTDGGVTWK), and 358 to 368 (FRSTDGGATWK). Residue aspartate 480 is the Proton donor of the active site. BNR repeat units lie at residues 533–541 (FSYDGGRNW), 577–586 (VTTDNGNSWK), 616–626 (YISTDGGLTFT), 660–671 (WRSTDGGYTFEK), and 708–718 (FRSDDAGKTWV). Residues 771-841 (DKGLVGDLNG…LLQAIPELPK (71 aa)) enclose the Dockerin domain.

Belongs to the glycosyl hydrolase 74 family.

In terms of biological role, hydrolyzes the glucosidic bonds of unbranched Glc residues in tamarind seed xyloglucan, producing XXXG, XLXG, XXLG and XLLG. Has low activity on carboxymethylcellulose, lichenan,hydroxyethylcellulose and glucuronoxylan, and no activity on xylan, polygalaturonic acid, wheat arabinoxylan, rhamnogalacturan, curdlan, laminarin, galactomannan, galactan, arabinan and pachyman or amorphous cellulose. In Acetivibrio thermocellus (strain ATCC 27405 / DSM 1237 / JCM 9322 / NBRC 103400 / NCIMB 10682 / NRRL B-4536 / VPI 7372) (Clostridium thermocellum), this protein is Xyloglucanase Xgh74A.